Here is a 412-residue protein sequence, read N- to C-terminus: Imidazolonepropionase (412 aa).

Fe(3+) is bound by residues His-76 and His-78. Zn(2+)-binding residues include His-76 and His-78. Residues Arg-85, Tyr-148, and His-181 each coordinate 4-imidazolone-5-propanoate. Tyr-148 is a binding site for N-formimidoyl-L-glutamate. His-242 serves as a coordination point for Fe(3+). His-242 is a Zn(2+) binding site. Glu-245 contributes to the 4-imidazolone-5-propanoate binding site. Fe(3+) is bound at residue Asp-317. Asp-317 is a binding site for Zn(2+). The N-formimidoyl-L-glutamate site is built by Asn-319 and Gly-321. Residue Ser-322 coordinates 4-imidazolone-5-propanoate.

It belongs to the metallo-dependent hydrolases superfamily. HutI family. Zn(2+) is required as a cofactor. Fe(3+) serves as cofactor.

Its subcellular location is the cytoplasm. It catalyses the reaction 4-imidazolone-5-propanoate + H2O = N-formimidoyl-L-glutamate. The protein operates within amino-acid degradation; L-histidine degradation into L-glutamate; N-formimidoyl-L-glutamate from L-histidine: step 3/3. Functionally, catalyzes the hydrolytic cleavage of the carbon-nitrogen bond in imidazolone-5-propanoate to yield N-formimidoyl-L-glutamate. It is the third step in the universal histidine degradation pathway. The protein is Imidazolonepropionase of Staphylococcus aureus (strain MRSA252).